The sequence spans 285 residues: K88 fimbrial protein AD (285 aa).

Residues 1 to 21 form the signal peptide; that stretch reads MKKTLIALAIAASAASGMAHA.

The protein belongs to the fimbrial K88 protein family. As to quaternary structure, K88 fimbria, 0.1-1 micrometer in length and 7 nanometers in diameter, is composed of about 100 identical subunits.

The protein localises to the fimbrium. Its function is as follows. K88 major fimbrial subunit. Fimbriae (also called pili), are polar filaments radiating from the surface of the bacterium to a length of 0.5-1.5 micrometers and numbering 100-300 per cell. They enable bacteria to colonize the epithelium of specific host organs. The sequence is that of K88 fimbrial protein AD (faeG) from Escherichia coli.